Here is a 135-residue protein sequence, read N- to C-terminus: RuBisCO chaperone RbcX (135 aa).

The interval 103–135 (QHLERMTQVSLSHPSPESEQQQFSDPDWDNLAS) is disordered. Over residues 109–126 (TQVSLSHPSPESEQQQFS) the composition is skewed to polar residues.

Belongs to the RbcX family. As to quaternary structure, homodimer. Interacts with the exposed C-terminal peptide of RbcL ('Glu-459-Asp-468'); binds 1 RbcL peptide per homodimer. Contacts a second RbcL monomer via its peripheral polar surface. A slightly longer RbcL peptide binds to RbcX2 with a higher affinity.

The protein localises to the carboxysome. It localises to the cytoplasm. In terms of biological role, an RbcL-specific chaperone. The central cleft of the RbcX homodimer (RbcX2) binds the C-terminus of an RbcL monomer, stabilizing the C-terminus and probably preventing its reassociation with chaperonin GroEL-ES. At the same time the peripheral region of RbcX2 binds a second RbcL monomer, bridging the RbcL homodimers in the correct orientation. The RbcX2(2)-bound RbcL dimers then assemble into the RbcL8 core (RbcL8-(RbcX2)8). RbcS binding triggers the release of RbcX2. Functionally, required for optimal reconstitution of RuBisCO upon expression of rbcL-rbcS subunits in E.coli. The sequence is that of RuBisCO chaperone RbcX from Anabaena sp. (strain CA / ATCC 33047).